The chain runs to 1100 residues: Lysylphosphatidylglycerol biosynthesis bifunctional protein LysX (1100 aa).

The phosphatidylglycerol lysyltransferase stretch occupies residues 1-601 (MTPTSLARAR…LLHSDGTAPD (601 aa)). Transmembrane regions (helical) follow at residues 18–38 (VPAAAGWIVGVIATLSLLASV), 60–80 (FPDTSFAWAFVLALLAAALAA), 84–104 (IAWWILVGYMIAAAGWNIAGL), 112–132 (FAEVGEVIGLAFHLAAIAFLL), 154–174 (LVASMAVGTLIGWGLLELFPG), 206–226 (VFVNALLGLFGAVALMVTAIV), and 314–332 (AYGWAPGVMGASAAGAQAF). The lysine--tRNA ligase stretch occupies residues 602-1100 (GMGLQADLAD…TLPFPLAKPR (499 aa)). A DNA-binding region (OB) is located at residues 661-739 (VAVAGRVLRS…SLLVSGWRLI (79 aa)). Residues Asp-1012 and Glu-1019 each coordinate Mg(2+).

It in the N-terminal section; belongs to the LPG synthetase family. The protein in the C-terminal section; belongs to the class-II aminoacyl-tRNA synthetase family. It depends on Mg(2+) as a cofactor.

It localises to the cell membrane. It carries out the reaction tRNA(Lys) + L-lysine + ATP = L-lysyl-tRNA(Lys) + AMP + diphosphate. It catalyses the reaction L-lysyl-tRNA(Lys) + a 1,2-diacyl-sn-glycero-3-phospho-(1'-sn-glycerol) = a 1,2-diacyl-sn-glycero-3-phospho-1'-(3'-O-L-lysyl)-sn-glycerol + tRNA(Lys). Its function is as follows. Catalyzes the production of L-lysyl-tRNA(Lys)transfer and the transfer of a lysyl group from L-lysyl-tRNA(Lys) to membrane-bound phosphatidylglycerol (PG), which produces lysylphosphatidylglycerol (LPG), one of the components of the bacterial membrane with a positive net charge. LPG synthesis contributes to the resistance to cationic antimicrobial peptides (CAMPs) and likely protects M.tuberculosis against the CAMPs produced by competiting microorganisms (bacteriocins). In fact, the modification of anionic phosphatidylglycerol with positively charged L-lysine results in repulsion of the peptides. In Mycolicibacterium vanbaalenii (strain DSM 7251 / JCM 13017 / BCRC 16820 / KCTC 9966 / NRRL B-24157 / PYR-1) (Mycobacterium vanbaalenii), this protein is Lysylphosphatidylglycerol biosynthesis bifunctional protein LysX (lysX).